The chain runs to 456 residues: MLNSAMSVVILAAGKGTRMYSDIPKVLHTLAGKPMVQHVIDAATKLGAAQVHLVYGHGGELLKQTLKDDKLNWVLQAEQLGTGHAMQQAAPFFSDDEDILMLYGDVPLISVETLQRLRDAKPQGGIGLLTVKLDDPSGYGRITRENGKVTGIVEHKDATDEQRQIQEINTGILIANGADLKRWLSKLTNNNAQGEYYITDIIALAYQEGREIAAVHPARISETDGVNNRLQLSRLERIYQAEQAEKLLLSGVMLRDPARFDLRGTLYCGMDVEIDANVIIEGYVTLGHRVKIGAGCIIKNSVIGDDCEISPYSVVEDAHLEAACTIGPFARLRPGAELLAGAHVGNFVEMKKARLGKGSKAGHLTYLGDAEIGDNVNIGAGTITCNYDGANKFKTVIGDDVFVGSDTQLVAPVTVGKGATIAAGTTVTRNVADNELVLSRVPQVHKQGWQRPVKKK.

The segment at 1-229 (MLNSAMSVVI…ISETDGVNNR (229 aa)) is pyrophosphorylase. UDP-N-acetyl-alpha-D-glucosamine contacts are provided by residues 11-14 (LAAG), Lys25, Gln76, 81-82 (GT), 103-105 (YGD), Gly140, Glu154, Asn169, and Asn227. Asp105 is a binding site for Mg(2+). Asn227 is a binding site for Mg(2+). Residues 230–250 (LQLSRLERIYQAEQAEKLLLS) form a linker region. Positions 251–456 (GVMLRDPARF…QGWQRPVKKK (206 aa)) are N-acetyltransferase. UDP-N-acetyl-alpha-D-glucosamine-binding residues include Arg333 and Lys351. The active-site Proton acceptor is His363. 2 residues coordinate UDP-N-acetyl-alpha-D-glucosamine: Tyr366 and Asn377. Acetyl-CoA is bound by residues Ala380, 386-387 (NY), Ser405, Ala423, and Arg440.

This sequence in the N-terminal section; belongs to the N-acetylglucosamine-1-phosphate uridyltransferase family. In the C-terminal section; belongs to the transferase hexapeptide repeat family. In terms of assembly, homotrimer. It depends on Mg(2+) as a cofactor.

The protein resides in the cytoplasm. The enzyme catalyses alpha-D-glucosamine 1-phosphate + acetyl-CoA = N-acetyl-alpha-D-glucosamine 1-phosphate + CoA + H(+). The catalysed reaction is N-acetyl-alpha-D-glucosamine 1-phosphate + UTP + H(+) = UDP-N-acetyl-alpha-D-glucosamine + diphosphate. Its pathway is nucleotide-sugar biosynthesis; UDP-N-acetyl-alpha-D-glucosamine biosynthesis; N-acetyl-alpha-D-glucosamine 1-phosphate from alpha-D-glucosamine 6-phosphate (route II): step 2/2. The protein operates within nucleotide-sugar biosynthesis; UDP-N-acetyl-alpha-D-glucosamine biosynthesis; UDP-N-acetyl-alpha-D-glucosamine from N-acetyl-alpha-D-glucosamine 1-phosphate: step 1/1. It participates in bacterial outer membrane biogenesis; LPS lipid A biosynthesis. In terms of biological role, catalyzes the last two sequential reactions in the de novo biosynthetic pathway for UDP-N-acetylglucosamine (UDP-GlcNAc). The C-terminal domain catalyzes the transfer of acetyl group from acetyl coenzyme A to glucosamine-1-phosphate (GlcN-1-P) to produce N-acetylglucosamine-1-phosphate (GlcNAc-1-P), which is converted into UDP-GlcNAc by the transfer of uridine 5-monophosphate (from uridine 5-triphosphate), a reaction catalyzed by the N-terminal domain. The sequence is that of Bifunctional protein GlmU from Salmonella typhi.